We begin with the raw amino-acid sequence, 837 residues long: Outer membrane usher protein PsaC (837 aa).

The signal sequence occupies residues 1-23 (MKKLIVQFTTITLLMSTSFLVGA).

This sequence belongs to the fimbrial export usher family.

Its subcellular location is the cell outer membrane. Involved in the export and assembly of PsaA (pH 6) fimbrial subunits across the outer membrane. The protein is Outer membrane usher protein PsaC (psaC) of Yersinia pestis.